The primary structure comprises 215 residues: Probable transaldolase (215 aa).

Catalysis depends on lysine 83, which acts as the Schiff-base intermediate with substrate.

It belongs to the transaldolase family. Type 3B subfamily.

It localises to the cytoplasm. The enzyme catalyses D-sedoheptulose 7-phosphate + D-glyceraldehyde 3-phosphate = D-erythrose 4-phosphate + beta-D-fructose 6-phosphate. The protein operates within carbohydrate degradation; pentose phosphate pathway; D-glyceraldehyde 3-phosphate and beta-D-fructose 6-phosphate from D-ribose 5-phosphate and D-xylulose 5-phosphate (non-oxidative stage): step 2/3. Its function is as follows. Transaldolase is important for the balance of metabolites in the pentose-phosphate pathway. In Pelotomaculum thermopropionicum (strain DSM 13744 / JCM 10971 / SI), this protein is Probable transaldolase.